Reading from the N-terminus, the 330-residue chain is D-lactate dehydrogenase (330 aa).

Residues 156–157 (RI), Asp-176, 206–207 (VP), 233–235 (AAR), and Asp-259 contribute to the NAD(+) site. Arg-235 is an active-site residue. The active site involves Glu-264. The Proton donor role is filled by His-296.

Belongs to the D-isomer specific 2-hydroxyacid dehydrogenase family.

The enzyme catalyses (R)-lactate + NAD(+) = pyruvate + NADH + H(+). This Staphylococcus aureus (strain MRSA252) protein is D-lactate dehydrogenase (ldhD).